We begin with the raw amino-acid sequence, 52 residues long: Conotoxin Cal9.2d (52 aa).

Positions 1 to 6 (KRGVTL) are excised as a propeptide. 3 disulfide bridges follow: Cys14–Cys31, Cys19–Cys41, and Cys21–Cys46.

Expressed by the venom duct.

It localises to the secreted. Its function is as follows. Probable neurotoxin with unknown target. Possibly targets ion channels. The polypeptide is Conotoxin Cal9.2d (Californiconus californicus (California cone)).